A 63-amino-acid polypeptide reads, in one-letter code: Conotoxin p5a (63 aa).

Residues 1–19 (MRCLPVFVILLLLIPSAPC) form the signal peptide. Residues 20 to 50 (VDAHPKTKDDMPLASFHDNAKGTLQRFWKKR) constitute a propeptide that is removed on maturation. 2 cysteine pairs are disulfide-bonded: Cys52–Cys59 and Cys53–Cys60. At Leu62 the chain carries Leucine amide.

As to expression, expressed by the venom duct.

The protein localises to the secreted. In vivo, low levels of the peptide injected into male specimens of the Siamese fighting fish causes an immediate aggressive display in this fish in response to their reflection when placed in a mirrored aquarium; High levels of the peptide suppressed this behavior. No effect is observed when injected into mice. The polypeptide is Conotoxin p5a (Conus purpurascens (Purple cone)).